Here is a 558-residue protein sequence, read N- to C-terminus: Deleted in azoospermia protein 2 (558 aa).

Polar residues predominate over residues 1 to 10; the sequence is MSAANPETPN. Positions 1 to 27 are disordered; the sequence is MSAANPETPNSTISREASTQSSSAAAS. Over residues 11–27 the composition is skewed to low complexity; the sequence is STISREASTQSSSAAAS. Residues 40–115 enclose the RRM domain; the sequence is NTVFVGGIDA…KKLKLGPAIR (76 aa). DAZ domains lie at 167-190, 191-214, 215-238, 239-262, 263-286, 287-310, 311-334, 335-358, 359-382, 383-406, 407-430, 431-454, 455-478, 479-502, and 503-526; these read AYSA…YNYQ, EYPT…YNYQ, PFPA…YNYQ, and AFPA…YNYQ.

The protein belongs to the RRM DAZ family. In terms of assembly, forms a heterodimer with BOLL and DAZL. Interacts with PUM2, DAZAP1, DAZAP2, DZIP1 and DZIP3. Testis specific.

It localises to the cytoplasm. Its subcellular location is the nucleus. In terms of biological role, RNA-binding protein that plays an essential role in spermatogenesis. May act by binding to the 3'-UTR of mRNAs and regulating their translation. The protein is Deleted in azoospermia protein 2 (DAZ2) of Homo sapiens (Human).